The chain runs to 543 residues: MENFKNNELESSPIINKNNSSHSINNEDNNYYSHNLEHNDNNNNDNNNTITNSHINNHDHKHNHEHEHKHKHNHDHNHDHDHNHEEEYGHGNELEHNNDQEHNVGNKNLLTNNNNQSKKKKHGHSHGGGEDGSSSGGGGGRHGHGHSHGGGSGSDHNHGSSDEDDEESKPLNQLRNLDSKKKARYSLILALTLTTIFMVGEIVGGYFANSLAIMTDAAHLLTDIGAMFLSLFAMWISQHPPTSSMSFGFHRAEILGALVSVLMIWALTGVLVYEAIQRILYPPDAVDGKIMFIIASCGLFINIIDAIILHWGSGGHGHSHGGGHGHSHGIGGGTQKKKSKKNRLLNNQGQDIEDLGGENGKNKKGVRNINVHSAYIHVLGDCFQSIGVMVASCIIWVHPHWKIADPITTLIFSVIVLGTTIKLLRESLGVLMEGVPPEIDVSEVKGDLSEIEGVTEVHDLHIWSITLGRPALSVHLTILPTIDPEEILSIANKILLEDYEINHTTIQIEKPLVKDKCKDHSCPPPKPKKKKIKNDNLSSPPNQ.

Positions 1-175 (MENFKNNELE…EESKPLNQLR (175 aa)) are disordered. The Cytoplasmic segment spans residues 1 to 186 (MENFKNNELE…LDSKKKARYS (186 aa)). Low complexity-rich tracts occupy residues 11-26 (SSPI…SINN) and 41-55 (NNNN…NSHI). Basic and acidic residues-rich tracts occupy residues 56 to 66 (NNHDHKHNHEH) and 76 to 104 (HNHD…EHNV). Residues 105–116 (GNKNLLTNNNNQ) are compositionally biased toward low complexity. Residues 130 to 140 (EDGSSSGGGGG) are compositionally biased toward gly residues. The chain crosses the membrane as a helical span at residues 187-207 (LILALTLTTIFMVGEIVGGYF). The Extracellular segment spans residues 208–216 (ANSLAIMTD). The chain crosses the membrane as a helical span at residues 217-237 (AAHLLTDIGAMFLSLFAMWIS). The Cytoplasmic segment spans residues 238–251 (QHPPTSSMSFGFHR). The chain crosses the membrane as a helical span at residues 252 to 272 (AEILGALVSVLMIWALTGVLV). Residues 273-289 (YEAIQRILYPPDAVDGK) lie on the Extracellular side of the membrane. The helical transmembrane segment at 290–310 (IMFIIASCGLFINIIDAIILH) threads the bilayer. Residues 311–375 (WGSGGHGHSH…VRNINVHSAY (65 aa)) are Cytoplasmic-facing. A disordered region spans residues 319–342 (SHGGGHGHSHGIGGGTQKKKSKKN). A helical transmembrane segment spans residues 376–396 (IHVLGDCFQSIGVMVASCIIW). At 397–402 (VHPHWK) the chain is on the extracellular side. The helical transmembrane segment at 403–423 (IADPITTLIFSVIVLGTTIKL) threads the bilayer. The Cytoplasmic portion of the chain corresponds to 424–543 (LRESLGVLME…NDNLSSPPNQ (120 aa)). Residues 516-543 (KCKDHSCPPPKPKKKKIKNDNLSSPPNQ) form a disordered region.

It belongs to the cation diffusion facilitator (CDF) transporter (TC 2.A.4) family. SLC30A subfamily.

The protein localises to the membrane. Functionally, may be involved in zinc transport from the cytoplasm to either intracellular organelles or extracellular spaces. In Dictyostelium discoideum (Social amoeba), this protein is Probable zinc transporter protein DDB_G0283629.